The following is a 315-amino-acid chain: tRNA dimethylallyltransferase (315 aa).

Residue 13–20 participates in ATP binding; the sequence is GPTASGKT. 15–20 contributes to the substrate binding site; it reads TASGKT. Interaction with substrate tRNA regions lie at residues 38 to 41, 162 to 166, 243 to 248, and 276 to 283; these read DSAL, QRLSR, RCVGYR, and KRQITWLR.

Belongs to the IPP transferase family. Monomer. It depends on Mg(2+) as a cofactor.

The enzyme catalyses adenosine(37) in tRNA + dimethylallyl diphosphate = N(6)-dimethylallyladenosine(37) in tRNA + diphosphate. In terms of biological role, catalyzes the transfer of a dimethylallyl group onto the adenine at position 37 in tRNAs that read codons beginning with uridine, leading to the formation of N6-(dimethylallyl)adenosine (i(6)A). The sequence is that of tRNA dimethylallyltransferase from Vibrio vulnificus (strain CMCP6).